The sequence spans 887 residues: Fibroblast growth factor receptor 2 (887 aa).

An N-terminal signal peptide occupies residues M1 to A18. The Extracellular segment spans residues Q19 to T416. Ig-like C2-type domains follow at residues N22–S115 and V180–K260. Residues N28, N74, N93, N230, N261, N268, N328, N334, and N364 are each glycosylated (N-linked (GlcNAc...) asparagine). A disulfide bond links C43 and C104. The Ig-like C2-type 3 domain occupies F297–D387. C313 and C380 form a disulfide bridge. A helical transmembrane segment spans residues I417 to I437. The Cytoplasmic portion of the chain corresponds to R438 to V887. In terms of domain architecture, Protein kinase spans L585–L862. ATP is bound by residues I591–V599 and K619. D728 functions as the Proton acceptor in the catalytic mechanism. At Y757 the chain carries Phosphotyrosine; by autocatalysis.

This sequence belongs to the protein kinase superfamily. Tyr protein kinase family. Fibroblast growth factor receptor subfamily. In terms of tissue distribution, expressed in brain, stem cells and the mesenchymal cells.

Its subcellular location is the membrane. It carries out the reaction L-tyrosyl-[protein] + ATP = O-phospho-L-tyrosyl-[protein] + ADP + H(+). In terms of biological role, receptor for basic fibroblast growth factor. This chain is Fibroblast growth factor receptor 2 (FGFR2), found in Dugesia japonica (Planarian).